The primary structure comprises 122 residues: Large ribosomal subunit protein bL12 (122 aa).

Belongs to the bacterial ribosomal protein bL12 family. As to quaternary structure, homodimer. Part of the ribosomal stalk of the 50S ribosomal subunit. Forms a multimeric L10(L12)X complex, where L10 forms an elongated spine to which 2 to 4 L12 dimers bind in a sequential fashion. Binds GTP-bound translation factors.

In terms of biological role, forms part of the ribosomal stalk which helps the ribosome interact with GTP-bound translation factors. Is thus essential for accurate translation. The protein is Large ribosomal subunit protein bL12 of Deinococcus radiodurans (strain ATCC 13939 / DSM 20539 / JCM 16871 / CCUG 27074 / LMG 4051 / NBRC 15346 / NCIMB 9279 / VKM B-1422 / R1).